A 376-amino-acid chain; its full sequence is RNA binding protein fox-1 homolog 1 (376 aa).

The tract at residues 1–126 (MEEKGSRMVQ…QPKRLHVSNI (126 aa)) is disordered. The span at 72–89 (QTHSEQSPADTNAQTVSG) shows a compositional bias: polar residues. Residues 90 to 101 (TATQTDDAAPTD) show a composition bias toward low complexity. Polar residues predominate over residues 102–115 (GQPQTQPSENTENK). The region spanning 119–195 (KRLHVSNIPF…RKIEVNNATA (77 aa)) is the RRM domain. Residue arginine 319 is modified to Asymmetric dimethylarginine.

As to quaternary structure, binds to the C-terminus of ATXN2.

It localises to the nucleus. Its subcellular location is the cytoplasm. Functionally, RNA-binding protein that regulates alternative splicing events by binding to 5'-UGCAUGU-3' elements. Prevents binding of U2AF2 to the 3'-splice site. Regulates alternative splicing of tissue-specific exons and of differentially spliced exons during erythropoiesis. The polypeptide is RNA binding protein fox-1 homolog 1 (RBFOX1) (Macaca fascicularis (Crab-eating macaque)).